A 217-amino-acid polypeptide reads, in one-letter code: Pyrrolidone-carboxylate peptidase (217 aa).

Catalysis depends on residues E78, C141, and H168.

Belongs to the peptidase C15 family. As to quaternary structure, homotetramer.

It is found in the cytoplasm. It carries out the reaction Release of an N-terminal pyroglutamyl group from a polypeptide, the second amino acid generally not being Pro.. Removes 5-oxoproline from various penultimate amino acid residues except L-proline. This is Pyrrolidone-carboxylate peptidase from Treponema denticola (strain ATCC 35405 / DSM 14222 / CIP 103919 / JCM 8153 / KCTC 15104).